A 355-amino-acid polypeptide reads, in one-letter code: MSGQGKRLMVMAGGTGGHVFPGLAVAHHLMAQGWQVRWLGTADRMEADLVPKHGIEIDFIRISGLRGKGIKALIAAPLRIFNAWRQARAIMKAYKPDVVLGMGGYVSGPGGLAAWSLGIPVVLHEQNGIAGLTNKWLAKIATKVMQAFPGAFPNAEVVGNPVRTDVLALSLPQQRLAGREGPVRVLVVGGSQGARILNQTMPQVAAKLGDSVTIWHQSGKGSQQSVEQAYAEAGQPQHKVTEFIDDMAAAYAWADVVVCRSGALTVSEIAAAGLPALFVPFQHKDRQQYWNALPLEKAGAAKIIEQPQLSVDAVANTLAGWSRETLLTMAERARAASIPDATERVANEVSRVARA.

Residues 15 to 17 (TGG), N127, R163, S191, I244, 263 to 268 (ALTVSE), and Q288 each bind UDP-N-acetyl-alpha-D-glucosamine.

This sequence belongs to the glycosyltransferase 28 family. MurG subfamily.

It is found in the cell inner membrane. The enzyme catalyses di-trans,octa-cis-undecaprenyl diphospho-N-acetyl-alpha-D-muramoyl-L-alanyl-D-glutamyl-meso-2,6-diaminopimeloyl-D-alanyl-D-alanine + UDP-N-acetyl-alpha-D-glucosamine = di-trans,octa-cis-undecaprenyl diphospho-[N-acetyl-alpha-D-glucosaminyl-(1-&gt;4)]-N-acetyl-alpha-D-muramoyl-L-alanyl-D-glutamyl-meso-2,6-diaminopimeloyl-D-alanyl-D-alanine + UDP + H(+). Its pathway is cell wall biogenesis; peptidoglycan biosynthesis. Functionally, cell wall formation. Catalyzes the transfer of a GlcNAc subunit on undecaprenyl-pyrophosphoryl-MurNAc-pentapeptide (lipid intermediate I) to form undecaprenyl-pyrophosphoryl-MurNAc-(pentapeptide)GlcNAc (lipid intermediate II). This is UDP-N-acetylglucosamine--N-acetylmuramyl-(pentapeptide) pyrophosphoryl-undecaprenol N-acetylglucosamine transferase from Escherichia coli O9:H4 (strain HS).